Consider the following 137-residue polypeptide: Flagellar basal body rod protein FlgB (137 aa).

Belongs to the flagella basal body rod proteins family. The basal body constitutes a major portion of the flagellar organelle and consists of a number of rings mounted on a central rod. In Gram-negative bacteria, at least four rings, L, P, S and M are present, whereas Gram-positive bacteria lack the L and P rings. The rod consists of about 26 subunits of FlgG in the distal portion, and FlgB, FlgC and FlgF build up the proximal portion of the rod with about 6 subunits each. Rod assembly occurs by export via the flagellum-specific pathway of its constituent proteins and by their incorporation into the rod structure in the probable order of FlgB, FlgC, FlgF and FlgG. Another protein, FliE, also assembles onto the stable rod structure.

It is found in the bacterial flagellum basal body. Its function is as follows. Structural component of flagellum, the bacterial motility apparatus. Part of the rod structure of flagellar basal body. This chain is Flagellar basal body rod protein FlgB, found in Proteus mirabilis (strain HI4320).